Consider the following 99-residue polypeptide: Nucleoid-associated protein EbfC (99 aa).

This sequence belongs to the YbaB/EbfC family. Homodimer.

Its subcellular location is the cytoplasm. It localises to the nucleoid. Functionally, binds to DNA and alters its conformation. May be involved in regulation of gene expression, nucleoid organization and DNA protection. This Borrelia turicatae (strain 91E135) protein is Nucleoid-associated protein EbfC.